Here is a 185-residue protein sequence, read N- to C-terminus: Acireductone dioxygenase (185 aa).

A disordered region spans residues 1-22; the sequence is MSRLSIHPEGSTNATSPAEPLL. Fe(2+) contacts are provided by H102, H104, E108, and H146. The Ni(2+) site is built by H102, H104, E108, and H146.

The protein belongs to the acireductone dioxygenase (ARD) family. In terms of assembly, monomer. Requires Fe(2+) as cofactor. Ni(2+) is required as a cofactor.

The enzyme catalyses 1,2-dihydroxy-5-(methylsulfanyl)pent-1-en-3-one + O2 = 3-(methylsulfanyl)propanoate + CO + formate + 2 H(+). It carries out the reaction 1,2-dihydroxy-5-(methylsulfanyl)pent-1-en-3-one + O2 = 4-methylsulfanyl-2-oxobutanoate + formate + 2 H(+). It functions in the pathway amino-acid biosynthesis; L-methionine biosynthesis via salvage pathway; L-methionine from S-methyl-5-thio-alpha-D-ribose 1-phosphate: step 5/6. Functionally, catalyzes 2 different reactions between oxygen and the acireductone 1,2-dihydroxy-3-keto-5-methylthiopentene (DHK-MTPene) depending upon the metal bound in the active site. Fe-containing acireductone dioxygenase (Fe-ARD) produces formate and 2-keto-4-methylthiobutyrate (KMTB), the alpha-ketoacid precursor of methionine in the methionine recycle pathway. Ni-containing acireductone dioxygenase (Ni-ARD) produces methylthiopropionate, carbon monoxide and formate, and does not lie on the methionine recycle pathway. This Prochlorococcus marinus (strain MIT 9313) protein is Acireductone dioxygenase.